The chain runs to 533 residues: Putative adhesin domain-containing protein LiaX (533 aa).

Positions 1–277 (MKERERVLEL…EFNYPNPQAS (277 aa)) are binds the antibiotic daptomycin (DAP) and the antimicrobial peptide human LL-37, under physiologically relevant concentrations. Protects the OG1RF and S613 strains from LL-37-mediated killing in a concentration-dependent manner. The disordered stretch occupies residues 63-89 (NALEKGESEGPTVDSFEENTQDSAEKD). Residues 83 to 186 (QDSAEKDREN…EEELKNIRKE (104 aa)) are a coiled coil. A putative adhesin region region spans residues 279-526 (IDVKVANGTV…INASTTTGSI (248 aa)). An involved in cell membrane remodeling region spans residues 289-526 (VFKTWDQEDV…INASTTTGSI (238 aa)).

Post-translationally, may undergo proteolytic cleavage, allowing release of the N-terminal region into the extracellular environment.

It localises to the secreted. The protein localises to the cell wall. Its subcellular location is the cell membrane. Involved in cell membrane remodeling, perhaps acting by negative modulation of the liaFSR and liaXYZ gene clusters, thereby regulating content and localization of anionic phospholipids. Binds to the antibiotic daptomycin (DAP) and to cationic antimicrobial peptides, such as human LL-37, perhaps functioning as a sensor that activates the cell envelope stress response. In Enterococcus faecalis (strain ATCC 700802 / V583), this protein is Putative adhesin domain-containing protein LiaX.